The sequence spans 153 residues: D-aminoacyl-tRNA deacylase (153 aa).

A Gly-cisPro motif, important for rejection of L-amino acids motif is present at residues 137-138 (GP).

This sequence belongs to the DTD family. Homodimer.

The protein resides in the cytoplasm. It catalyses the reaction glycyl-tRNA(Ala) + H2O = tRNA(Ala) + glycine + H(+). The enzyme catalyses a D-aminoacyl-tRNA + H2O = a tRNA + a D-alpha-amino acid + H(+). Its function is as follows. An aminoacyl-tRNA editing enzyme that deacylates mischarged D-aminoacyl-tRNAs. Also deacylates mischarged glycyl-tRNA(Ala), protecting cells against glycine mischarging by AlaRS. Acts via tRNA-based rather than protein-based catalysis; rejects L-amino acids rather than detecting D-amino acids in the active site. By recycling D-aminoacyl-tRNA to D-amino acids and free tRNA molecules, this enzyme counteracts the toxicity associated with the formation of D-aminoacyl-tRNA entities in vivo and helps enforce protein L-homochirality. This Herpetosiphon aurantiacus (strain ATCC 23779 / DSM 785 / 114-95) protein is D-aminoacyl-tRNA deacylase.